A 118-amino-acid chain; its full sequence is Large ribosomal subunit protein uL18 (118 aa).

This sequence belongs to the universal ribosomal protein uL18 family. Part of the 50S ribosomal subunit; part of the 5S rRNA/L5/L18/L25 subcomplex. Contacts the 5S and 23S rRNAs.

This is one of the proteins that bind and probably mediate the attachment of the 5S RNA into the large ribosomal subunit, where it forms part of the central protuberance. This chain is Large ribosomal subunit protein uL18, found in Rickettsia conorii (strain ATCC VR-613 / Malish 7).